The sequence spans 266 residues: tRNA pseudouridine synthase A (266 aa).

Catalysis depends on aspartate 52, which acts as the Nucleophile. Residue tyrosine 113 coordinates substrate.

The protein belongs to the tRNA pseudouridine synthase TruA family. As to quaternary structure, homodimer.

It catalyses the reaction uridine(38/39/40) in tRNA = pseudouridine(38/39/40) in tRNA. Functionally, formation of pseudouridine at positions 38, 39 and 40 in the anticodon stem and loop of transfer RNAs. This chain is tRNA pseudouridine synthase A, found in Agrobacterium fabrum (strain C58 / ATCC 33970) (Agrobacterium tumefaciens (strain C58)).